The chain runs to 2477 residues: Non-reducing polyketide synthase mapC (2477 aa).

The tract at residues 14–269 (LLFGPQCSEI…HQQTHREGIQ (256 aa)) is N-terminal acylcarrier protein transacylase domain (SAT). Positions 403–820 (MPPIAITGMA…GSNAALIVRD (418 aa)) constitute a Ketosynthase family 3 (KS3) domain. Active-site for beta-ketoacyl synthase activity residues include Cys568, His703, and His742. Residues 930-1233 (LCFGGQNGVT…HRVNLDGSDG (304 aa)) are malonyl-CoA:ACP transacylase (MAT) domain. The active-site For acyl/malonyl transferase activity is Ser1017. Residues 1302–1435 (QERAGLLRKL…GSVSLCNERS (134 aa)) form an N-terminal hotdog fold region. A PKS/mFAS DH domain is found at 1302–1612 (QERAGLLRKL…FMSVSIRSLT (311 aa)). Residues 1307–1611 (LLRKLSDGPE…RFMSVSIRSL (305 aa)) form a product template (PT) domain region. The active-site Proton acceptor; for dehydratase activity is the His1336. Positions 1461–1612 (ASNGLKGSTV…FMSVSIRSLT (152 aa)) are C-terminal hotdog fold. Catalysis depends on Asp1518, which acts as the Proton donor; for dehydratase activity. The Carrier domain occupies 1651–1725 (DSDLVAVQEM…GLTEHIFPGH (75 aa)). The residue at position 1685 (Ser1685) is an O-(pantetheine 4'-phosphoryl)serine. Positions 1882–2117 (PYALEHDLLQ…GFEWVGWTNN (236 aa)) are methyltransferase (CMeT) domain. Active-site for thioesterase activity residues include Ser2267 and Asp2421.

The protein resides in the cytoplasm. Its subcellular location is the cytosol. It catalyses the reaction 3 malonyl-CoA + acetyl-CoA + S-adenosyl-L-methionine + H(+) = 5-methylorsellinate + S-adenosyl-L-homocysteine + 3 CO2 + 4 CoA. It functions in the pathway secondary metabolite biosynthesis; terpenoid biosynthesis. Functionally, non-reducing polyketide synthase; part of the gene cluster that mediates the biosynthesis of mycophenolic acid (MPA), the first isolated antibiotic natural product in the world obtained from a culture of Penicillium brevicompactum in 1893. MpaC catalyzes the synthesis of 5-methylorsellinic acid (5MOA) via the condensation of 1 acetyl-CoA starter unit with 3 malonyl-CoA units and one methylation step. The first step of the pathway is the synthesis of 5-methylorsellinic acid (5MOA) by the cytosolic polyketide synthase mpaC. 5MOA is then converted to the phthalide compound 5,7-dihydroxy-4,6-dimethylphthalide (DHMP) by the endoplasmic reticulum-bound cytochrome P450 monooxygenase mpaDE. MpaDE first catalyzes hydroxylation of 5-MOA to 4,6-dihydroxy-2-(hydroxymethyl)-3-methylbenzoic acid (DHMB). MpaDE then acts as a lactone synthase that catalyzes the ring closure to convert DHMB into DHMP. The next step is the prenylation of DHMP by the Golgi apparatus-associated prenyltransferase mpaA to yield farnesyl-DHMP (FDHMP). The ER-bound oxygenase mpaB then mediates the oxidative cleavage the C19-C20 double bond in FDHMP to yield FDHMP-3C via a mycophenolic aldehyde intermediate. The O-methyltransferase mpaG catalyzes the methylation of FDHMP-3C to yield MFDHMP-3C. After the cytosolic methylation of FDHMP-3C, MFDHMP-3C enters into peroxisomes probably via free diffusion due to its low molecular weight. Upon a peroxisomal CoA ligation reaction, catalyzed by a beta-oxidation component enzyme acyl-CoA ligase ACL891, MFDHMP-3C-CoA would then be restricted to peroxisomes for the following beta-oxidation pathway steps. The peroxisomal beta-oxidation machinery than converts MFDHMP-3C-CoA into MPA_CoA, via a beta-oxidation chain-shortening process. Finally mpaH acts as a peroxisomal acyl-CoA hydrolase with high substrate specificity toward MPA-CoA to release the final product MPA. In Penicillium roqueforti (strain FM164), this protein is Non-reducing polyketide synthase mapC.